We begin with the raw amino-acid sequence, 243 residues long: Adenylate dimethylallyltransferase (243 aa).

It belongs to the isopentenyl transferase family.

The catalysed reaction is dimethylallyl diphosphate + AMP = N(6)-(dimethylallyl)adenosine 5'-phosphate + diphosphate. Transfers dimethylallyl groups to AMP as part of the biosynthesis of cytokinin phytohormones. This is Adenylate dimethylallyltransferase (tzs) from Rhizobium rhizogenes (Agrobacterium rhizogenes).